We begin with the raw amino-acid sequence, 170 residues long: E1B protein, small T-antigen (170 aa).

The protein belongs to the adenoviridae E1B 19 kDa protein family.

This Canine adenovirus serotype 2 (CAdV-2) protein is E1B protein, small T-antigen.